Consider the following 185-residue polypeptide: Casparian strip membrane protein 2 (185 aa).

Topologically, residues 1–25 are cytoplasmic; that stretch reads MKAVSIEAGEGSKAKRVHGVNRGIS. The chain crosses the membrane as a helical span at residues 26–46; that stretch reads VFDLVLRIVALVGTLASAVAM. At 47–73 the chain is on the extracellular side; it reads GTADQALSFSTQIVNFEAQYDDIDAFK. A helical membrane pass occupies residues 74–94; the sequence is FFVVSNSITCVYLALSIPISI. Over 95–106 the chain is Cytoplasmic; sequence FHIIRSRAGKSR. The helical transmembrane segment at 107-127 threads the bilayer; the sequence is VLLIVLDAIMLVFLTSGASAA. The Extracellular portion of the chain corresponds to 128-160; sequence AAIVYLAHNGNTSTNWFSICQQYTDFCQRSAGS. N-linked (GlcNAc...) asparagine glycosylation occurs at Asn138. A helical transmembrane segment spans residues 161-181; that stretch reads LIGSFGAMALMVLLIILSSIA. The Cytoplasmic segment spans residues 182 to 185; the sequence is LSRR.

It belongs to the Casparian strip membrane proteins (CASP) family. In terms of assembly, homodimer and heterodimers.

The protein localises to the cell membrane. In terms of biological role, regulates membrane-cell wall junctions and localized cell wall deposition. Required for establishment of the Casparian strip membrane domain (CSD) and the subsequent formation of Casparian strips, a cell wall modification of the root endodermis that determines an apoplastic barrier between the intraorganismal apoplasm and the extraorganismal apoplasm and prevents lateral diffusion. This Solanum demissum (Wild potato) protein is Casparian strip membrane protein 2.